Here is a 590-residue protein sequence, read N- to C-terminus: MKKPQEMQTMRRKVISDNKPTQEAAKSASNTLSGLNDISTKLDDAQAASELIAQTVEEKSNEIIGAIDNVESAVSDTSAGSELIAETVEIGNNINKEIGESLGSKLDKLTSLLEQKIQTAGIQQTGTSLATVESAIPVKVVEDDTAESVGPLLPAPEAVNNDPDADFFPTPQPVEPKQESPEEKQKKEAFNLKLSQALDKLTKTVDFGFKKSISITDKISSMLFKYTVSAAIEAAKMTAMILAVVVGIDLLMIHFKYWSDKFSKAWDLFSTDFTKFSSETGTWGPLLQSIFDSIDKIKQLWEAGDWGGLTVAIVEGLGKVLFNLGELIQLGMAKLSAAILRVIPGMKDTADEVEGRALENFQNSTGASLNKEDQEKVANYQDKRMNGDLGPIAEGLDKISNWKTRASNWIRGVDNKEALTTDEERAAEEEKLKQLSPEERKNALMKANEARAAMIRFEKYADSADMSKDSTVKSVEAAYEDLKKRMDDPDLNNSPAVKKELAARFSKIDATYQELKKNQPNAKPETSAKSPEAKQVQVIEKNKAQQAPVQQASPSINNTNNVIKKNTVVHNMTPVTSTTAPGVFDATGVN.

3 disordered regions span residues 1 to 35 (MKKP…LSGL), 147 to 185 (ESVG…EEKQ), and 515 to 535 (LKKN…EAKQ). Basic and acidic residues predominate over residues 176-185 (PKQESPEEKQ).

The protein localises to the virion. Functionally, serves as a base for tail tube protein polymerization and acts as a template for tail length determination. The protein is Tape measure protein (29) of Escherichia coli (Bacteriophage T4).